A 350-amino-acid polypeptide reads, in one-letter code: Ketol-acid reductoisomerase (NADP(+)) (350 aa).

The region spanning 4-187 is the KARI N-terminal Rossmann domain; sequence VSITTDYSRM…GGARANIIKT (184 aa). Residues 30 to 33, Arg-53, Thr-58, and 88 to 91 contribute to the NADP(+) site; these read YGSQ and DMVQ. The active site involves His-113. Residue Gly-139 participates in NADP(+) binding. A KARI C-terminal knotted domain is found at 188–333; it reads TFKEETETDL…KQLRAKMVWL (146 aa). Positions 196, 200, 232, and 236 each coordinate Mg(2+). A substrate-binding site is contributed by Ser-257.

It belongs to the ketol-acid reductoisomerase family. Mg(2+) serves as cofactor.

The catalysed reaction is (2R)-2,3-dihydroxy-3-methylbutanoate + NADP(+) = (2S)-2-acetolactate + NADPH + H(+). It carries out the reaction (2R,3R)-2,3-dihydroxy-3-methylpentanoate + NADP(+) = (S)-2-ethyl-2-hydroxy-3-oxobutanoate + NADPH + H(+). It participates in amino-acid biosynthesis; L-isoleucine biosynthesis; L-isoleucine from 2-oxobutanoate: step 2/4. The protein operates within amino-acid biosynthesis; L-valine biosynthesis; L-valine from pyruvate: step 2/4. In terms of biological role, involved in the biosynthesis of branched-chain amino acids (BCAA). Catalyzes an alkyl-migration followed by a ketol-acid reduction of (S)-2-acetolactate (S2AL) to yield (R)-2,3-dihydroxy-isovalerate. In the isomerase reaction, S2AL is rearranged via a Mg-dependent methyl migration to produce 3-hydroxy-3-methyl-2-ketobutyrate (HMKB). In the reductase reaction, this 2-ketoacid undergoes a metal-dependent reduction by NADPH to yield (R)-2,3-dihydroxy-isovalerate. In Xylella fastidiosa (strain Temecula1 / ATCC 700964), this protein is Ketol-acid reductoisomerase (NADP(+)).